The primary structure comprises 427 residues: Citrate synthase (427 aa).

An N6-acetyllysine modification is found at K283. Active-site residues include H306 and D363.

This sequence belongs to the citrate synthase family. As to quaternary structure, homohexamer.

It carries out the reaction oxaloacetate + acetyl-CoA + H2O = citrate + CoA + H(+). It participates in carbohydrate metabolism; tricarboxylic acid cycle; isocitrate from oxaloacetate: step 1/2. The sequence is that of Citrate synthase (gltA) from Escherichia coli O6:H1 (strain CFT073 / ATCC 700928 / UPEC).